Reading from the N-terminus, the 180-residue chain is Methionine-R-sulfoxide reductase B2, mitochondrial (180 aa).

Residues 1-41 (MSRFLVRLSTVVSKGATGKSVLPQKRIFAGIRLISSSTGLQ) constitute a mitochondrion transit peptide. One can recognise a MsrB domain in the interval 49 to 178 (STDWQRKLSP…NSVALNFKPR (130 aa)). The Zn(2+) site is built by Cys-88, Cys-91, Cys-144, and Cys-147. Cys-167 (nucleophile) is an active-site residue.

Belongs to the MsrB Met sulfoxide reductase family. Requires Zn(2+) as cofactor.

It localises to the mitochondrion. It carries out the reaction L-methionyl-[protein] + [thioredoxin]-disulfide + H2O = L-methionyl-(R)-S-oxide-[protein] + [thioredoxin]-dithiol. The enzyme catalyses [thioredoxin]-disulfide + L-methionine + H2O = L-methionine (R)-S-oxide + [thioredoxin]-dithiol. Its function is as follows. Methionine-sulfoxide reductase that specifically reduces methionine (R)-sulfoxide back to methionine. While in many cases, methionine oxidation is the result of random oxidation following oxidative stress, methionine oxidation is also a post-translational modification that takes place on specific residue. Upon oxidative stress, may play a role in the preservation of mitochondrial integrity by decreasing the intracellular reactive oxygen species build-up through its scavenging role, hence contributing to cell survival and protein maintenance. This chain is Methionine-R-sulfoxide reductase B2, mitochondrial (msrb2), found in Danio rerio (Zebrafish).